The primary structure comprises 119 residues: Basic phospholipase A2 taipoxin alpha chain (119 aa).

Disulfide bonds link C11/C72, C27/C118, C29/C45, C44/C99, C51/C92, C61/C85, and C79/C90. 3 residues coordinate Ca(2+): Y28, G30, and G32. H48 is an active-site residue. Position 49 (D49) interacts with Ca(2+). Residue D93 is part of the active site.

The protein belongs to the phospholipase A2 family. Group I subfamily. D49 sub-subfamily. As to quaternary structure, heterotrimer of alpha, beta, and gamma chains; non-covalently linked. The cofactor is Ca(2+). Expressed by the venom gland.

It localises to the secreted. It catalyses the reaction a 1,2-diacyl-sn-glycero-3-phosphocholine + H2O = a 1-acyl-sn-glycero-3-phosphocholine + a fatty acid + H(+). Heterotrimer: Snake venom phospholipase A2 (PLA2) heterotrimer that acts as a potent presynaptic neurotoxin by blocking synaptic transmission and synaptic vesicle recycling. May act by binding in a calcium-dependent fashion to neurotonal pentraxin-1 (NPTX1) and neurotonal pentraxin-2 (NPTX2), but not to neuronal pentraxin receptor (NPTXR). Also binds to taipoxin-associated calcium binding protein 49 (RCN2), a protein localized in the lumen of endoplasmic reticulum. In terms of biological role, monomer (alpha chain): Snake venom phospholipase A2 (PLA2) alpha chain that possesses the same high enzymatic activity as the heterotrimer. PLA2 catalyzes the calcium-dependent hydrolysis of the 2-acyl groups in 3-sn-phosphoglycerides. The chain is Basic phospholipase A2 taipoxin alpha chain from Oxyuranus scutellatus scutellatus (Australian taipan).